The primary structure comprises 148 residues: Large ribosomal subunit protein uL22 (148 aa).

Belongs to the universal ribosomal protein uL22 family. In terms of assembly, part of the 50S ribosomal subunit.

Functionally, this protein binds specifically to 23S rRNA; its binding is stimulated by other ribosomal proteins, e.g. L4, L17, and L20. It is important during the early stages of 50S assembly. It makes multiple contacts with different domains of the 23S rRNA in the assembled 50S subunit and ribosome. In terms of biological role, the globular domain of the protein is located near the polypeptide exit tunnel on the outside of the subunit, while an extended beta-hairpin is found that lines the wall of the exit tunnel in the center of the 70S ribosome. This is Large ribosomal subunit protein uL22 from Thermosipho africanus (strain TCF52B).